A 428-amino-acid polypeptide reads, in one-letter code: Glutamine synthetase, chloroplastic (428 aa).

A chloroplast-targeting transit peptide spans 1 to 48 (MAQAVVPAMQCQVGAVRARPAAAAAAAGGRVWGVRRTGRGTSGFRVMA). One can recognise a GS beta-grasp domain in the interval 75–155 (IIAEYIWVGG…VMCDTYTPAG (81 aa)). The tract at residues 95–120 (TISKPVEDPSELPKWNYDGSSTGQAP) is disordered. Positions 159–428 (PTNKRNRAAQ…LAAKKLALKV (270 aa)) constitute a GS catalytic domain.

This sequence belongs to the glutamine synthetase family. Homooctamer.

It is found in the plastid. Its subcellular location is the chloroplast. The enzyme catalyses L-glutamate + NH4(+) + ATP = L-glutamine + ADP + phosphate + H(+). Its function is as follows. Light-modulated chloroplastic glutamine synthetase, encoded by a nuclear gene and expressed primarily in leaves, and which is responsible for the reassimilation of the ammonia generated by photorespiration. This is Glutamine synthetase, chloroplastic from Oryza sativa subsp. japonica (Rice).